The primary structure comprises 836 residues: Homeobox-leucine zipper protein ATHB-15 (836 aa).

A DNA-binding region (homeobox) is located at residues 14-77 (DNGKYVRYTP…NRRCREKQRK (64 aa)). The stretch at 72 to 115 (REKQRKEASRLQAVNRKLTAMNKLLMEENDRLQKQVSQLVHENS) forms a coiled coil. The START domain maps to 151–379 (RDASPAGLLS…IAQEVTQTNS (229 aa)).

It belongs to the HD-ZIP homeobox family. Class III subfamily. As to quaternary structure, interacts with ESR1 and ESR2. Interacts with ZPR3. Highly expressed the developing vascular elements and the adaxial portion of cotyledons. Expressed in developing ovules, stamens and carpels. Expressed in procambium and shoot meristem.

The protein localises to the nucleus. Its function is as follows. Probable transcription factor involved in the regulation of meristem development to promote lateral organ formation. May regulates procambial and vascular tissue formation or maintenance, and vascular development in inflorescence stems. The sequence is that of Homeobox-leucine zipper protein ATHB-15 (ATHB-15) from Arabidopsis thaliana (Mouse-ear cress).